An 886-amino-acid chain; its full sequence is Alanine--tRNA ligase (886 aa).

Zn(2+) contacts are provided by His564, His568, Cys666, and His670.

This sequence belongs to the class-II aminoacyl-tRNA synthetase family. It depends on Zn(2+) as a cofactor.

It localises to the cytoplasm. It catalyses the reaction tRNA(Ala) + L-alanine + ATP = L-alanyl-tRNA(Ala) + AMP + diphosphate. In terms of biological role, catalyzes the attachment of alanine to tRNA(Ala) in a two-step reaction: alanine is first activated by ATP to form Ala-AMP and then transferred to the acceptor end of tRNA(Ala). Also edits incorrectly charged Ser-tRNA(Ala) and Gly-tRNA(Ala) via its editing domain. This chain is Alanine--tRNA ligase, found in Prochlorococcus marinus (strain MIT 9312).